The chain runs to 1274 residues: DENN domain-containing protein 3 (1274 aa).

The disordered stretch occupies residues 65–108; the sequence is GQVPGASCALGKGRRRSFRKKREKPRMEPWKSHPGDSKGPDSED. A uDENN domain is found at 75–245; the sequence is GKGRRRSFRK…LIPSPPPGPL (171 aa). Over residues 76–88 the composition is skewed to basic residues; sequence KGRRRSFRKKREK. Positions 89-105 are enriched in basic and acidic residues; sequence PRMEPWKSHPGDSKGPD. The cDENN domain maps to 268–400; the sequence is IVDLDLHLPL…PLLLAQTFIQ (133 aa). In terms of domain architecture, dDENN spans 402 to 506; sequence VQSLQLHPDL…KARLNGRMDA (105 aa). The tract at residues 520–970 is linker; that stretch reads RIDRMLISPR…KHKINPSAGE (451 aa). 2 positions are modified to phosphoserine; by ULK1: S554 and S572. Y940 carries the post-translational modification Phosphotyrosine. 7 WD repeats span residues 975–1013, 1019–1055, 1059–1099, 1103–1140, 1146–1181, 1186–1228, and 1234–1273; these read AIEV…VFDA, HQHC…IINV, SCNK…AWNV, RVIS…TPQG, LKHP…MWSL, QPPQ…IYVM, and TVEK…IWKV.

Forms oligomers. Interacts with 6 of the 7 known isoforms of 14-3-3 proteins.

It is found in the cytoplasm. Functionally, guanine nucleotide exchange factor (GEF) activating Rab12. Promotes the exchange of GDP to GTP, converting inactive GDP-bound Rab12 into its active GTP-bound form. Regulates autophagy in response to starvation through Rab12 activation. Starvation leads to ULK1/2-dependent phosphorylation of Ser-554 and Ser-572, which in turn allows recruitment of 14-3-3 adapter proteins and leads to up-regulation of GEF activity towards Rab12. Also plays a role in protein transport from recycling endosomes to lysosomes, regulating, for instance, the degradation of the transferrin receptor and of the amino acid transporter PAT4. Starvation also induces phosphorylation at Tyr-940, which leads to up-regulated GEF activity and initiates autophagy. The chain is DENN domain-containing protein 3 (Dennd3) from Mus musculus (Mouse).